The chain runs to 180 residues: MSIEEIPQGADVSILSKNEKKARELIKKLNLKQIKGITRVTFKQRGNLIYAIDQPDVFRSSAGTYVVFGEAKVDDMNKRIAEAQQQQAQQDALSKAAGETGEAGEEDKSQDAITADLEKASLNTNKIEEEEADDGEVDESGLDAKDIDIIVEQTQVSRAKAVKALRVHDGDMVNAIMELS.

Residues 16–80 enclose the NAC-A/B domain; that stretch reads SKNEKKAREL…AKVDDMNKRI (65 aa). The interval 81–113 is disordered; sequence AEAQQQQAQQDALSKAAGETGEAGEEDKSQDAI. A compositionally biased stretch (low complexity) spans 82–100; sequence EAQQQQAQQDALSKAAGET. In terms of domain architecture, UBA spans 142-179; sequence LDAKDIDIIVEQTQVSRAKAVKALRVHDGDMVNAIMEL.

The protein belongs to the NAC-alpha family. Part of the nascent polypeptide-associated complex (NAC), consisting of EGD2 and EGD1. NAC associates with ribosomes via EGD1.

The protein localises to the cytoplasm. It is found in the nucleus. Component of the nascent polypeptide-associated complex (NAC), a dynamic component of the ribosomal exit tunnel, protecting the emerging polypeptides from interaction with other cytoplasmic proteins to ensure appropriate nascent protein targeting. The NAC complex also promotes mitochondrial protein import by enhancing productive ribosome interactions with the outer mitochondrial membrane and blocks the inappropriate interaction of ribosomes translating non-secretory nascent polypeptides with translocation sites in the membrane of the endoplasmic reticulum. EGD2 may also be involved in transcription regulation. The polypeptide is Nascent polypeptide-associated complex subunit alpha (EGD2) (Debaryomyces hansenii (strain ATCC 36239 / CBS 767 / BCRC 21394 / JCM 1990 / NBRC 0083 / IGC 2968) (Yeast)).